We begin with the raw amino-acid sequence, 207 residues long: Small ribosomal subunit protein uS4 (207 aa).

The segment at 31-56 (KCKLDSKPGQHGRTSGARTSDYGNQL) is disordered. Residues 42-53 (GRTSGARTSDYG) show a composition bias toward polar residues. In terms of domain architecture, S4 RNA-binding spans 97–157 (ARLDNVVYRM…EKSKKQVRIV (61 aa)).

It belongs to the universal ribosomal protein uS4 family. As to quaternary structure, part of the 30S ribosomal subunit. Contacts protein S5. The interaction surface between S4 and S5 is involved in control of translational fidelity.

Functionally, one of the primary rRNA binding proteins, it binds directly to 16S rRNA where it nucleates assembly of the body of the 30S subunit. With S5 and S12 plays an important role in translational accuracy. The chain is Small ribosomal subunit protein uS4 from Janthinobacterium sp. (strain Marseille) (Minibacterium massiliensis).